The chain runs to 947 residues: Plasma membrane ATPase 2 (947 aa).

The disordered stretch occupies residues 1-103 (MSSTEAKQYK…TDGVHAGQRV (103 aa)). Residues 1-144 (MSSTEAKQYK…AEENESLIVK (144 aa)) are Cytoplasmic-facing. Basic and acidic residues predominate over residues 7–22 (KQYKEKPSKEYLHASD). Residues 26-61 (PANNSAASSSSSSSTSTSASSSAAAVPRKAAAASAA) show a composition bias toward low complexity. Over residues 62–74 (DDSDSDEDIDQLI) the composition is skewed to acidic residues. A helical membrane pass occupies residues 145–165 (FLMFFVGPIQFVMEAAAILAA). The Extracellular portion of the chain corresponds to 166 to 169 (GLSD). Residues 170–189 (WVDVGVICALLLLNASVGFI) form a helical membrane-spanning segment. Over 190 to 320 (QEFQAGSIVD…VEGHFTEVLN (131 aa)) the chain is Cytoplasmic. A helical transmembrane segment spans residues 321–342 (GIGIILLVLVIATLLLVWTACF). Over 343 to 353 (YRTVGIVSILR) the chain is Extracellular. A helical transmembrane segment spans residues 354–376 (YTLGITIIGVPVGLPAVVTTTMA). The Cytoplasmic segment spans residues 377–748 (VGAAYLAKKQ…IAILNNSLDI (372 aa)). The active-site 4-aspartylphosphate intermediate is the D407. Residues D663 and D667 each contribute to the Mg(2+) site. A helical membrane pass occupies residues 749 to 767 (NLIVFIAIFADVATLTIAY). The Extracellular segment spans residues 768-783 (DNAPYAPEPVKWNLPR). A helical membrane pass occupies residues 784-803 (LWGMSIILGIVLAIGSWITL). Residues 804–853 (TTMFLPNGGIIQNFGAMNGVMFLQISLTENWLIFVTRAAGPFWSSIPSWQ) are Cytoplasmic-facing. A helical membrane pass occupies residues 854–874 (LAGAVFAVDIIATMFTLFGWW). The Extracellular portion of the chain corresponds to 875 to 886 (SENWTDIVSVVR). A helical transmembrane segment spans residues 887-903 (VWIWSIGIFCVLGGFYY). Residues 904-947 (IMSTSQAFDRLMNGKSLKEKKSTRSVEDFMAAMQRVSTQHEKSS) are Cytoplasmic-facing.

The protein belongs to the cation transport ATPase (P-type) (TC 3.A.3) family. Type IIIA subfamily.

The protein localises to the cell membrane. The catalysed reaction is ATP + H2O + H(+)(in) = ADP + phosphate + 2 H(+)(out). Functionally, the plasma membrane ATPase of plants and fungi is a hydrogen ion pump. The proton gradient it generates drives the active transport of nutrients by H(+)-symport. The resulting external acidification and/or internal alkinization may mediate growth responses. The sequence is that of Plasma membrane ATPase 2 (PMA2) from Saccharomyces cerevisiae (strain ATCC 204508 / S288c) (Baker's yeast).